The sequence spans 377 residues: MYSSEELWNSTEQVWINGSGTNFSLGRHEDDEEEEGDKHPFFTDAWLVPLFFSLIMLVGLVGNSLVIYVISKHRQMRTATNFYIANLAATDIIFLVCCVPFTATLYPLPGWIFGNFMCKFVAFLQQVTVQATCITLTAMSGDRCYVTVYPLKSLRHRTPKVAMIVSICIWIGSFVLSTPILMYQRIEEGYWYGPRQYCMERFPSKTHERAFILYQFIAAYLLPVLTISFCYTLMVKRVGQPTVEPVDNNYQVNLLSERTISIRSKVSKMVVVIVLLFAICWGPIQIFVLFQSFYPNYQPNYATYKIKTWANCMSYANSSVNPIVYGFMGASFQKSFRKTFPFLFKHKVRDSSMASRTANAEIKFVAAEEGNNNNAVN.

Residues 1–49 are Extracellular-facing; the sequence is MYSSEELWNSTEQVWINGSGTNFSLGRHEDDEEEEGDKHPFFTDAWLVP. N-linked (GlcNAc...) asparagine glycosylation is found at asparagine 9, asparagine 17, and asparagine 22. The helical transmembrane segment at 50-70 threads the bilayer; sequence LFFSLIMLVGLVGNSLVIYVI. Over 71–91 the chain is Cytoplasmic; that stretch reads SKHRQMRTATNFYIANLAATD. Residues 92-112 form a helical membrane-spanning segment; the sequence is IIFLVCCVPFTATLYPLPGWI. The Extracellular portion of the chain corresponds to 113–119; that stretch reads FGNFMCK. Cysteines 118 and 198 form a disulfide. A helical transmembrane segment spans residues 120 to 140; it reads FVAFLQQVTVQATCITLTAMS. Residues 141–160 lie on the Cytoplasmic side of the membrane; sequence GDRCYVTVYPLKSLRHRTPK. Residues 161 to 181 traverse the membrane as a helical segment; the sequence is VAMIVSICIWIGSFVLSTPIL. Residues 182–209 are Extracellular-facing; the sequence is MYQRIEEGYWYGPRQYCMERFPSKTHER. Residues 210 to 230 form a helical membrane-spanning segment; that stretch reads AFILYQFIAAYLLPVLTISFC. Residues 231–269 are Cytoplasmic-facing; the sequence is YTLMVKRVGQPTVEPVDNNYQVNLLSERTISIRSKVSKM. Residues 270–290 traverse the membrane as a helical segment; it reads VVVIVLLFAICWGPIQIFVLF. Residues 291 to 305 are Extracellular-facing; the sequence is QSFYPNYQPNYATYK. The helical transmembrane segment at 306-328 threads the bilayer; it reads IKTWANCMSYANSSVNPIVYGFM. Residues 329–377 lie on the Cytoplasmic side of the membrane; sequence GASFQKSFRKTFPFLFKHKVRDSSMASRTANAEIKFVAAEEGNNNNAVN.

Belongs to the G-protein coupled receptor 1 family. Expressed in a significantly high percentage (45-60%) of mature GnRH1, GnRH2, and GnRH3 neurons and in immature GnRH3 neurons, which had migrated to the vicinity of their final locations in the brain. Only 5% of immature GnRH1 and GnRH2 neurons have receptor transcripts.

The protein resides in the cell membrane. Its function is as follows. Receptor speculated to be essential for sexual development. May regulate gonadotropin-releasing hormone (GnRH) secretion. The receptor expression could be a 'stop signal' for GnRH1, GnRH2, and GnRH3 neuronal migration, leading to suppression of cell growth and modulation of GnRH secretion, which is important for normal sexual development. The protein is G-protein coupled receptor 54 (gpr54) of Oreochromis niloticus (Nile tilapia).